We begin with the raw amino-acid sequence, 214 residues long: Octanoyltransferase (214 aa).

Residues 34–214 (GLQKELVWLL…KFNEIFSSFN (181 aa)) form the BPL/LPL catalytic domain. Residues 73–80 (RGGKYTYH), 145–147 (AFG), and 158–160 (GVS) contribute to the substrate site. C176 functions as the Acyl-thioester intermediate in the catalytic mechanism.

This sequence belongs to the LipB family.

Its subcellular location is the cytoplasm. The enzyme catalyses octanoyl-[ACP] + L-lysyl-[protein] = N(6)-octanoyl-L-lysyl-[protein] + holo-[ACP] + H(+). Its pathway is protein modification; protein lipoylation via endogenous pathway; protein N(6)-(lipoyl)lysine from octanoyl-[acyl-carrier-protein]: step 1/2. In terms of biological role, catalyzes the transfer of endogenously produced octanoic acid from octanoyl-acyl-carrier-protein onto the lipoyl domains of lipoate-dependent enzymes. Lipoyl-ACP can also act as a substrate although octanoyl-ACP is likely to be the physiological substrate. In Ehrlichia canis (strain Jake), this protein is Octanoyltransferase.